The following is a 156-amino-acid chain: Small ribosomal subunit protein uS7 (156 aa).

The protein belongs to the universal ribosomal protein uS7 family. Part of the 30S ribosomal subunit. Contacts proteins S9 and S11.

In terms of biological role, one of the primary rRNA binding proteins, it binds directly to 16S rRNA where it nucleates assembly of the head domain of the 30S subunit. Is located at the subunit interface close to the decoding center, probably blocks exit of the E-site tRNA. In Pseudomonas syringae pv. syringae (strain B728a), this protein is Small ribosomal subunit protein uS7.